The chain runs to 211 residues: WAP four-disulfide core domain protein 1 (211 aa).

The N-terminal stretch at 1-23 (MGNCGRKVLRALSFLLLLGSSSA) is a signal peptide. A WAP domain is found at 50 to 99 (RQPHADRCPPPPRTLPPGACQATRCQADSECPRHRRCCYNGCAYACLEAV). Cystine bridges form between cysteine 57-cysteine 87, cysteine 69-cysteine 91, cysteine 74-cysteine 86, and cysteine 80-cysteine 95. Positions 182 to 198 (VLRQRLHKEYPEGDSKN) are enriched in basic and acidic residues. Positions 182-211 (VLRQRLHKEYPEGDSKNVAEPGKGQQRHFP) are disordered.

It localises to the secreted. In terms of biological role, has growth inhibitory activity. This chain is WAP four-disulfide core domain protein 1 (Wfdc1), found in Mus musculus (Mouse).